A 207-amino-acid polypeptide reads, in one-letter code: Peptidyl-tRNA hydrolase (207 aa).

Tyr-15 lines the tRNA pocket. His-20 functions as the Proton acceptor in the catalytic mechanism. Phe-66, Asn-68, and Asn-114 together coordinate tRNA. The segment at 187-207 (HTTKPPRPKPARPATAESDKG) is disordered. Low complexity predominate over residues 198–207 (RPATAESDKG).

The protein belongs to the PTH family. In terms of assembly, monomer.

The protein resides in the cytoplasm. It carries out the reaction an N-acyl-L-alpha-aminoacyl-tRNA + H2O = an N-acyl-L-amino acid + a tRNA + H(+). Hydrolyzes ribosome-free peptidyl-tRNAs (with 1 or more amino acids incorporated), which drop off the ribosome during protein synthesis, or as a result of ribosome stalling. Its function is as follows. Catalyzes the release of premature peptidyl moieties from peptidyl-tRNA molecules trapped in stalled 50S ribosomal subunits, and thus maintains levels of free tRNAs and 50S ribosomes. This is Peptidyl-tRNA hydrolase from Delftia acidovorans (strain DSM 14801 / SPH-1).